An 860-amino-acid polypeptide reads, in one-letter code: Alanine--tRNA ligase (860 aa).

His563, His567, Cys665, and His669 together coordinate Zn(2+).

Belongs to the class-II aminoacyl-tRNA synthetase family. Zn(2+) serves as cofactor.

The protein localises to the cytoplasm. It catalyses the reaction tRNA(Ala) + L-alanine + ATP = L-alanyl-tRNA(Ala) + AMP + diphosphate. Its function is as follows. Catalyzes the attachment of alanine to tRNA(Ala) in a two-step reaction: alanine is first activated by ATP to form Ala-AMP and then transferred to the acceptor end of tRNA(Ala). Also edits incorrectly charged Ser-tRNA(Ala) and Gly-tRNA(Ala) via its editing domain. The chain is Alanine--tRNA ligase from Vibrio parahaemolyticus serotype O3:K6 (strain RIMD 2210633).